Here is a 765-residue protein sequence, read N- to C-terminus: Palmitoyltransferase ZDHHC8 (765 aa).

Residues 1–13 (MPRSPGTRLKPAK) are Cytoplasmic-facing. The chain crosses the membrane as a helical span at residues 14–34 (YIPVATAAALLVGSSTLFFVF). At 35-52 (TCPWLTRAVSPAVPVYNG) the chain is on the lumenal side. Residues 53 to 73 (IIFLFVLANFSMATFMDPGVF) traverse the membrane as a helical segment. Over 74–148 (PRADEDEDKE…NCIGRRNYRY (75 aa)) the chain is Cytoplasmic. The 51-residue stretch at 104 to 154 (KWCATCHFYRPPRCSHCSVCDNCVEDFDHHCPWVNNCIGRRNYRYFFLFLL) folds into the DHHC domain. The active-site S-palmitoyl cysteine intermediate is Cys134. A helical transmembrane segment spans residues 149 to 169 (FFLFLLSLSAHMVGVVAFGLV). Residues 170–190 (YVLNHAEGLGAAHTTITMAVM) are Lumenal-facing. The helical transmembrane segment at 191 to 211 (CVAGLFFIPVIGLTGFHVVLV) threads the bilayer. Residues 212–765 (TRGRTTNEQV…VGGTTYEISV (554 aa)) are Cytoplasmic-facing. The segment at 293-352 (GLGRSKSKGSLDRLDEKPLDLGPPLPPKIEAGTFSSDLQTPRPGSAESALSVQRTSPPTP) is disordered. Residues 301-311 (GSLDRLDEKPL) show a composition bias toward basic and acidic residues. Position 337 is a phosphoserine (Ser337). Residue Arg441 is modified to Omega-N-methylarginine. The segment at 509 to 540 (LHPGATGDPPRPLPRSFSPVLGPRPREPSPVR) is disordered. Phosphoserine is present on residues Ser606, Ser627, Ser675, Ser682, Ser725, and Ser743. The segment at 613 to 747 (GPGFGGARNP…PGPSASPTRH (135 aa)) is disordered. Residues 622 to 653 (PALQTSLSSLSSSVSRAPRTSSSSLQADQASS) show a composition bias toward low complexity.

Belongs to the DHHC palmitoyltransferase family. ERF2/ZDHHC9 subfamily. Widely expressed.

It is found in the golgi apparatus membrane. It localises to the mitochondrion membrane. The enzyme catalyses L-cysteinyl-[protein] + hexadecanoyl-CoA = S-hexadecanoyl-L-cysteinyl-[protein] + CoA. Palmitoyltransferase that catalyzes the addition of palmitate onto various protein substrates and therefore functions in several unrelated biological processes. Through the palmitoylation of ABCA1 regulates the localization of the transporter to the plasma membrane and thereby regulates its function in cholesterol and phospholipid efflux. Could also pamitoylate the D(2) dopamine receptor DRD2 and regulate its stability and localization to the plasma membrane. Could also play a role in glutamatergic transmission. Functionally, (Microbial infection) Able to palmitoylate SARS coronavirus-2/SARS-CoV-2 spike protein following its synthesis in the endoplasmic reticulum (ER). In the infected cell, promotes spike biogenesis by protecting it from premature ER degradation, increases half-life and controls the lipid organization of its immediate membrane environment. Once the virus has formed, spike palmitoylation controls fusion with the target cell. The chain is Palmitoyltransferase ZDHHC8 from Homo sapiens (Human).